Here is a 491-residue protein sequence, read N- to C-terminus: Lysine--tRNA ligase (491 aa).

Mg(2+) is bound by residues Glu-400 and Glu-407.

The protein belongs to the class-II aminoacyl-tRNA synthetase family. As to quaternary structure, homodimer. Mg(2+) serves as cofactor.

The protein localises to the cytoplasm. It catalyses the reaction tRNA(Lys) + L-lysine + ATP = L-lysyl-tRNA(Lys) + AMP + diphosphate. This chain is Lysine--tRNA ligase, found in Mesomycoplasma hyopneumoniae (strain 7448) (Mycoplasma hyopneumoniae).